The primary structure comprises 352 residues: Tropomodulin-3 (352 aa).

Ser25 is modified (phosphoserine).

The protein belongs to the tropomodulin family. As to quaternary structure, binds to the N-terminus of tropomyosin and to actin. Interacts with FLII. As to expression, ubiquitous.

It localises to the cytoplasm. The protein resides in the cytoskeleton. Its function is as follows. Blocks the elongation and depolymerization of the actin filaments at the pointed end. The Tmod/TM complex contributes to the formation of the short actin protofilament, which in turn defines the geometry of the membrane skeleton. The chain is Tropomodulin-3 (Tmod3) from Mus musculus (Mouse).